Consider the following 302-residue polypeptide: MKKNYRFSTALSQFSADSFRQGKSLRFPSPAKLNLFLYINGKRADGYHELQTLFQFLDYGDWLEISARADGEIHLTPQLPGVKEEDNLIYRAAHILQQNTGCTLGADIRLDKILPMGGGVGGGSSNAATVLVALNYLWKTRLSLSELADLGVKLGADVPIFIHGNAAFAEGVGEKLTDCEPPEKWFVVLKPETSISTALVFTHPDLPRNTPKRPLTRLLTEEYGNDCEKVVRNCYPEVEETLTWLLKYAPSRLTGTGACVFAEFDNEKSAQAVFDMKPASVSGFVAKGCNRSPLHQWLDKIS.

The active site involves K32. Position 115–125 (115–125 (PMGGGVGGGSS)) interacts with ATP. Residue D157 is part of the active site.

Belongs to the GHMP kinase family. IspE subfamily.

The enzyme catalyses 4-CDP-2-C-methyl-D-erythritol + ATP = 4-CDP-2-C-methyl-D-erythritol 2-phosphate + ADP + H(+). The protein operates within isoprenoid biosynthesis; isopentenyl diphosphate biosynthesis via DXP pathway; isopentenyl diphosphate from 1-deoxy-D-xylulose 5-phosphate: step 3/6. In terms of biological role, catalyzes the phosphorylation of the position 2 hydroxy group of 4-diphosphocytidyl-2C-methyl-D-erythritol. In Actinobacillus succinogenes (strain ATCC 55618 / DSM 22257 / CCUG 43843 / 130Z), this protein is 4-diphosphocytidyl-2-C-methyl-D-erythritol kinase.